The sequence spans 198 residues: Nucleoside triphosphate pyrophosphatase (198 aa).

The active-site Proton acceptor is D75.

The protein belongs to the Maf family. The cofactor is a divalent metal cation.

It localises to the cytoplasm. The enzyme catalyses a ribonucleoside 5'-triphosphate + H2O = a ribonucleoside 5'-phosphate + diphosphate + H(+). It catalyses the reaction a 2'-deoxyribonucleoside 5'-triphosphate + H2O = a 2'-deoxyribonucleoside 5'-phosphate + diphosphate + H(+). Functionally, nucleoside triphosphate pyrophosphatase. May have a dual role in cell division arrest and in preventing the incorporation of modified nucleotides into cellular nucleic acids. The polypeptide is Nucleoside triphosphate pyrophosphatase (Hyphomonas neptunium (strain ATCC 15444)).